We begin with the raw amino-acid sequence, 1806 residues long: SH3 and multiple ankyrin repeat domains protein 3 (1806 aa).

The segment at 76–150 (MDGPGASAVV…KFLDEERLLQ (75 aa)) is intramolecular interaction with the ANK repeats. At Tyr-197 the chain carries Phosphotyrosine. ANK repeat units follow at residues 223–253 (SGEC…HLDF), 257–286 (DGLT…SPDY), 290–320 (RGLT…QLGI), 324–353 (NGWQ…DMGA), 357–386 (SGNT…NRDV), and 390–420 (NSQT…DVVP). Residues 407–416 (AEVIKTHKDS) show a composition bias toward basic and acidic residues. Residues 407–467 (AEVIKTHKDS…AQPAASPGPS (61 aa)) are disordered. Positions 439-461 (LASPRPLQRSASDINLKGEAQPA) are enriched in pro residues. Phosphoserine occurs at positions 448, 450, 463, 470, and 558. The 60-residue stretch at 546–605 (VPGRKFIAVKAHSPQGEGEIPLHRGEAVKVLSIGEGGFWEGTVKGRTGWFPADCVEEVQM) folds into the SH3 domain. A Phosphotyrosine modification is found at Tyr-631. Residues 646-740 (VAVLQKRDHE…RLVMKVVSVT (95 aa)) enclose the PDZ domain. Disordered stretches follow at residues 665-689 (KAET…ESVD) and 760-853 (PSTT…KGIP). Positions 753-760 (PPPPKRAP) are required for interaction with ABI1. Ser-770 bears the Phosphoserine mark. The span at 813–845 (ATVKQRPTSRRITPAEISSLFERQGLPGPEKLP) shows a compositional bias: pro residues. 3 positions are modified to phosphoserine: Ser-857, Ser-866, and Ser-877. Residues 871-1021 (RFPRSTSMQD…FSASLFAPSK (151 aa)) are disordered. Residues 906-915 (DSGPPPAFSP) show a composition bias toward pro residues. Ser-966 and Ser-973 each carry phosphoserine. Thr-988 carries the phosphothreonine modification. Over residues 993–1013 (PKRRPRPPGPDSPYANLGAFS) the composition is skewed to gly residues. Tyr-1006 is modified (phosphotyrosine). The residue at position 1041 (Arg-1041) is an Asymmetric dimethylarginine. Positions 1115-1124 (PGADLPSLQP) are enriched in low complexity. Disordered stretches follow at residues 1115–1460 (PGAD…MSTL), 1475–1525 (ADGH…HHAA), and 1546–1584 (SKLW…KDTR). Residues 1173 to 1193 (TGKPLDPSSPLALALAARERA) show a composition bias toward basic and acidic residues. Thr-1204 is modified (phosphothreonine). Phosphoserine occurs at positions 1208, 1233, 1237, and 1240. Residues 1251-1261 (EAEKVPREERK) show a composition bias toward pro residues. Thr-1309 carries the phosphothreonine modification. Position 1328 is a phosphoserine (Ser-1328). Residues 1360-1370 (LPPAQLSSSDE) show a composition bias toward basic and acidic residues. Low complexity-rich tracts occupy residues 1371–1392 (ETRE…ANGV) and 1444–1460 (HLET…MSTL). Positions 1485–1491 (PPVPPKP) match the SH3-binding motif. Ser-1495 is subject to Phosphoserine. Residues 1495-1505 (SPLGKGPVTFR) show a composition bias toward polar residues. Positions 1569 to 1589 (ISELSSRLQQLNKDTRSLGEE) form a coiled coil. 4 positions are modified to phosphoserine: Ser-1585, Ser-1596, Ser-1604, and Ser-1614. A compositionally biased stretch (low complexity) spans 1627–1637 (PGGPGGGASYS). The disordered stretch occupies residues 1627 to 1664 (PGGPGGGASYSVRPSGRYPVARRAPSPVKPASLERVEG). Pro residues predominate over residues 1638-1657 (VRPSGRYPVARRAPSPVKPA). Residues Ser-1709, Ser-1711, and Ser-1713 each carry the phosphoserine modification. The SAM domain occupies 1743–1806 (WSKFDVGDWL…ERALRQLDGS (64 aa)).

As to quaternary structure, may homomultimerize via its SAM domain. Interacts with BAIAP2, DBNL and SLC17A7/VGLUT1. Interacts with DLGAP1/GKAP, GRM1/MGLUR1, GRM5/MGLUR5 and LZTS3 C-termini via its PDZ domain. Interacts with ABI1, HOMER1, HOMER2, HOMER3 and CTTN/cortactin SH3 domain. Is part of a complex with DLG4/PSD-95 and DLGAP1/GKAP. Interacts (via PDZ domain) with the GRIA1 subunit of the AMPA receptor (via PDZ-binding motif). Interacts with WASF1 and CYFIP2; the interactions mediate the association of SHANK3 with the WAVE1 complex. Interacts with ARPC2; the interaction probably mediates the association of SHANK3 with the Arp2/3 complex. Interacts (via ANK repeats) with SHARPIN and SPTAN1. Interacts (via PDZ domain) with ARHGAP44 (probably via PDZ-binding motif); the interaction takes place in dendritic spines and promotes GRIA1 exocytosis. Interacts with CAMK2A. Interacts with DIP2A. Interacts with ADGRL3. As to expression, expressed in the cerebral cortex and the cerebellum.

The protein resides in the cytoplasm. Its subcellular location is the postsynaptic density. The protein localises to the cell projection. It is found in the dendritic spine. Functionally, major scaffold postsynaptic density protein which interacts with multiple proteins and complexes to orchestrate the dendritic spine and synapse formation, maturation and maintenance. Interconnects receptors of the postsynaptic membrane including NMDA-type and metabotropic glutamate receptors via complexes with GKAP/PSD-95 and HOMER, respectively, and the actin-based cytoskeleton. Plays a role in the structural and functional organization of the dendritic spine and synaptic junction through the interaction with Arp2/3 and WAVE1 complex as well as the promotion of the F-actin clusters. By way of this control of actin dynamics, participates in the regulation of developing neurons growth cone motility and the NMDA receptor-signaling. Also modulates GRIA1 exocytosis and GRM5/MGLUR5 expression and signaling to control the AMPA and metabotropic glutamate receptor-mediated synaptic transmission and plasticity. May be required at an early stage of synapse formation and be inhibited by IGF1 to promote synapse maturation. The sequence is that of SH3 and multiple ankyrin repeat domains protein 3 (SHANK3) from Homo sapiens (Human).